We begin with the raw amino-acid sequence, 180 residues long: tRNA (cytidine(56)-2'-O)-methyltransferase (180 aa).

S-adenosyl-L-methionine-binding positions include L85, 114-118, and 132-139; these read GAEKV and VGNQPHSE.

It belongs to the aTrm56 family. As to quaternary structure, homodimer.

It localises to the cytoplasm. The catalysed reaction is cytidine(56) in tRNA + S-adenosyl-L-methionine = 2'-O-methylcytidine(56) in tRNA + S-adenosyl-L-homocysteine + H(+). Specifically catalyzes the AdoMet-dependent 2'-O-ribose methylation of cytidine at position 56 in tRNAs. This is tRNA (cytidine(56)-2'-O)-methyltransferase from Thermococcus kodakarensis (strain ATCC BAA-918 / JCM 12380 / KOD1) (Pyrococcus kodakaraensis (strain KOD1)).